Consider the following 838-residue polypeptide: Axin-2 (838 aa).

The segment at 1 to 75 (MSSAVLVTLL…EGRASPDSPL (75 aa)) is disordered. The Tankyrase-binding motif signature appears at 21–30 (APRPPVPGEE). Polar residues predominate over residues 42–55 (KVQSTKPMPVSSNA). Residues 56–69 (RRNEDGLGEPEGRA) are compositionally biased toward basic and acidic residues. One can recognise an RGS domain in the interval 81-200 (SLHSLLGDQD…LTSDIYLEYV (120 aa)). Disordered regions lie at residues 300 to 333 (SELS…KKQL), 398 to 435 (IRED…EEDP), 450 to 483 (PGCQ…LLPT), 568 to 682 (GSRG…AMPP), and 712 to 744 (VASQ…DHKE). The span at 303-318 (SSDALTDDSMSMTDSS) shows a compositional bias: low complexity. Residues 327–413 (MGSKKQLQRE…KEGSEQALSS (87 aa)) form an interaction with GSK3B region. The segment at 413-476 (SRDGAPVQHP…PDHHHHHHQQ (64 aa)) is interaction with beta-catenin. The span at 727-737 (AGPTSFSNPSL) shows a compositional bias: polar residues. Positions 756 to 838 (ASELIVTYFF…RILGKVERID (83 aa)) constitute a DIX domain.

In terms of assembly, interacts with SMAD7 and RNF111. Interacts with ANKRD6. Interacts with glycogen synthase kinase-3 beta (GSK3B) and beta-catenin. The interaction between axin and beta-catenin occurs via the armadillo repeats contained in beta-catenin. Interacts with SIAH1. Interacts with SIAH2. ADP-ribosylated by tankyrase TNKS and TNKS2. Poly-ADP-ribosylated protein is recognized by RNF146, followed by ubiquitination and subsequent activation of the Wnt signaling pathway. In terms of processing, ubiquitinated by RNF146 when poly-ADP-ribosylated, leading to its degradation and subsequent activation of the Wnt signaling pathway. Deubiquitinated by USP34, deubiquitinated downstream of beta-catenin stabilization step: deubiquitination is important Wnt signaling to positively regulate beta-catenin (CTNBB1)-mediated transcription. Post-translationally, probably phosphorylated by GSK3B and dephosphorylated by PP2A. In terms of tissue distribution, expressed in lung and thymus.

It localises to the cytoplasm. Its function is as follows. Inhibitor of the Wnt signaling pathway. Down-regulates beta-catenin. Probably facilitate the phosphorylation of beta-catenin and APC by GSK3B. This chain is Axin-2 (Axin2), found in Rattus norvegicus (Rat).